The chain runs to 104 residues: uncharacterized protein (104 aa).

The next 2 helical transmembrane spans lie at 47–67 (IDHR…LAML) and 72–92 (VGHV…FVLA).

This sequence to M.leprae ML1584.

The protein resides in the cell membrane. This is an uncharacterized protein from Mycobacterium tuberculosis (strain CDC 1551 / Oshkosh).